Consider the following 186-residue polypeptide: PR-toxin biosynthesis cluster protein 7 (186 aa).

Residues 24–43 (LGEVTTGGVTPRGTFIFCPI) form a helical membrane-spanning segment.

It localises to the membrane. Its pathway is sesquiterpene biosynthesis. Functionally, part of the gene cluster that mediates the biosynthesis of PR-toxin, a bicyclic sesquiterpene belonging to the eremophilane class and acting as a mycotoxin. The first step of the pathway is catalyzed by the aristolochene synthase which performs the cyclization of trans,trans-farnesyl diphosphate (FPP) to the bicyclic sesquiterpene aristolochene. Following the formation of aristolochene, the non-oxygenated aristolochene is converted to the trioxygenated intermediate eremofortin B, via 7-epi-neopetasone. This conversion appears to involve three enzymes, a hydroxysterol oxidase-like enzyme, the quinone-oxidase prx3 that forms the quinone-type-structure in the bicyclic nucleus of aristolochene with the C8-oxo group and the C-3 hydroxyl group, and the P450 monooxygenase ORF6 that introduces the epoxide at the double bond between carbons 1 and 2. No monoxy or dioxy-intermediates have been reported to be released to the broth, so these three early oxidative reactions may be coupled together. Eremofortin B is further oxidized by another P450 monooxygenase, that introduces a second epoxide between carbons 7 and 11 prior to acetylation to eremofortin A by the acetyltransferase ORF8. The second epoxidation may be performed by a second P450 monooxygenase. After the acetylation step, eremofortin A is converted to eremofortin C and then to PR-toxin. First the conversion of eremofortin A to eremofortin C proceeds by oxidation of the side chain of the molecule at C-12 and is catalyzed by the short-chain oxidoreductase prx1. The cytochrome P450 monooxygenase ORF6 is probably also involved in this step. The primary alcohol formed at C-12 is finally oxidized by the short-chain alcohol dehydrogenase prx4 that forms PR-toxin. This Penicillium roqueforti (strain FM164) protein is PR-toxin biosynthesis cluster protein 7.